Consider the following 292-residue polypeptide: Alpha-soluble NSF attachment protein (292 aa).

This sequence belongs to the SNAP family.

It localises to the cytoplasmic vesicle. It is found in the membrane. Functionally, required for vesicular transport between the endoplasmic reticulum and the Golgi apparatus. Also between the endosome and phagosome. The sequence is that of Alpha-soluble NSF attachment protein from Drosophila melanogaster (Fruit fly).